The following is a 1698-amino-acid chain: Protein 4.1 homolog (1698 aa).

The segment at 1–31 (MPAEIKPSAPAEPETPTKSKPKSSSSSHGKP) is disordered. Residues 12–27 (EPETPTKSKPKSSSSS) show a composition bias toward low complexity. The 283-residue stretch at 32–314 (ALARVTLLDG…EHHTFFRLMT (283 aa)) folds into the FERM domain. The tract at residues 317 to 434 (PVSKSKMFPV…KEEKERKERE (118 aa)) is hydrophilic. Disordered regions lie at residues 335–361 (GRTQAESTNTPVDRTPPKFNRTLSGAR) and 374–710 (EKEK…SDPT). Positions 374-448 (EKEKVARKSS…EEKKKAEKAA (75 aa)) are enriched in basic and acidic residues. The span at 449–461 (KAALAAGAAAGAA) shows a compositional bias: low complexity. Residues S471, S474, and S478 each carry the phosphoserine modification. Positions 499–514 (KDGKDKSGKDKDKEVG) are enriched in basic and acidic residues. The segment covering 562–571 (DGNTSPTRKS) has biased composition (polar residues). S566 is modified (phosphoserine). The segment covering 579–589 (YDQDPNSRKSG) has biased composition (basic and acidic residues). Positions 594-603 (EQLSPTSQQK) are enriched in polar residues. Over residues 618–627 (ALKETAEKLK) the composition is skewed to basic and acidic residues. Phosphoserine occurs at positions 659 and 687. A compositionally biased stretch (polar residues) spans 684 to 696 (RSYSPTKGPQGYS). T689 is subject to Phosphothreonine. A phosphoserine mark is found at S697, S1398, S1401, and S1402. Residues 1286–1698 (GEIVQVDPND…EKIEIQQQTQ (413 aa)) are C-terminal (CTD). A Phosphothreonine modification is found at T1407. The span at 1509–1532 (LGKNAKTEQLEEKTVATTRTHDPN) shows a compositional bias: basic and acidic residues. The disordered stretch occupies residues 1509-1599 (LGKNAKTEQL…SPLFTTSATT (91 aa)). Positions 1533 to 1554 (KQQQRVVTQEVKTTATVTSGDQ) are enriched in polar residues. Residues 1561-1571 (VSSTSSGDSGT) show a composition bias toward low complexity. Over residues 1584-1599 (RTDNQKSPLFTTSATT) the composition is skewed to polar residues. Residue S1590 is modified to Phosphoserine.

In terms of tissue distribution, at onset of germ band retraction, expression is seen in epidermis, hindgut and foregut. During retraction, expression extends to tracheal branches and salivary glands.

Its subcellular location is the cell junction. The protein resides in the septate junction. Its function is as follows. An integral component of the septate junction. May play a role in cell-cell interactions that are necessary for proper development. Vital for embryonic development. This Drosophila melanogaster (Fruit fly) protein is Protein 4.1 homolog (cora).